The sequence spans 435 residues: Galactomannan galactosyltransferase 1 (435 aa).

Topologically, residues 1–20 (MAKFGSRNKSPKWISNGCCF) are cytoplasmic. Residues 21-41 (LLGAFTALLLLWGLCSFIIPI) traverse the membrane as a helical; Signal-anchor for type II membrane protein segment. The Lumenal portion of the chain corresponds to 42 to 435 (PNTDPKLNSV…SPLPFGYPAA (394 aa)). Residues Asn230 and Asn328 are each glycosylated (N-linked (GlcNAc...) asparagine). Residues 321-354 (EIVKTYENISERYDEVERKVEGLRRRHAEKVSEK) are a coiled coil.

Belongs to the glycosyltransferase 34 family.

It is found in the golgi apparatus membrane. Functionally, galactomannan galactosyltransferase (GMGT) involved in galactomannan biosynthesis in seed endosperm. GMGT specificity is an important factor regulating the distribution and amount of alpha-1,6-galactose (Gal) substitution of the beta-1,4-linked mannan backbone. The sequence is that of Galactomannan galactosyltransferase 1 (GMGT1) from Cyamopsis tetragonoloba (Guar).